The following is a 528-amino-acid chain: Bifunctional pantoate ligase/cytidylate kinase (528 aa).

Residues 1–293 are pantoate--beta-alanine ligase; sequence MRLFTTIAGL…IGSCRLIDNI (293 aa). Position 34 to 41 (34 to 41) interacts with ATP; the sequence is MGALHKGH. H41 functions as the Proton donor in the catalytic mechanism. Q65 contributes to the (R)-pantoate binding site. Position 65 (Q65) interacts with beta-alanine. ATP is bound at residue 160-163; sequence GQKD. Position 166 (Q166) interacts with (R)-pantoate. ATP is bound by residues I189 and 197–200; that span reads ISSR. Residues 294-528 form a cytidylate kinase region; that stretch reads LLRNRKPIIA…YGKSSVNNII (235 aa).

In the N-terminal section; belongs to the pantothenate synthetase family. This sequence in the C-terminal section; belongs to the cytidylate kinase family. Type 1 subfamily.

It is found in the cytoplasm. It catalyses the reaction (R)-pantoate + beta-alanine + ATP = (R)-pantothenate + AMP + diphosphate + H(+). It carries out the reaction CMP + ATP = CDP + ADP. The catalysed reaction is dCMP + ATP = dCDP + ADP. It functions in the pathway cofactor biosynthesis; (R)-pantothenate biosynthesis; (R)-pantothenate from (R)-pantoate and beta-alanine: step 1/1. Its function is as follows. Catalyzes the condensation of pantoate with beta-alanine in an ATP-dependent reaction via a pantoyl-adenylate intermediate. In terms of biological role, catalyzes the transfer of a phosphate group from ATP to either CMP or dCMP to form CDP or dCDP and ADP, respectively. In Trichodesmium erythraeum (strain IMS101), this protein is Bifunctional pantoate ligase/cytidylate kinase.